The chain runs to 149 residues: UPF0178 protein HEAR0259 (149 aa).

Belongs to the UPF0178 family.

This chain is UPF0178 protein HEAR0259, found in Herminiimonas arsenicoxydans.